A 176-amino-acid chain; its full sequence is Shikimate kinase (176 aa).

Threonine 10–serine 15 serves as a coordination point for ATP. Mg(2+) is bound at residue serine 14. Substrate is bound by residues aspartate 32, glycine 81, and arginine 138.

The protein belongs to the shikimate kinase family. In terms of assembly, monomer. Requires Mg(2+) as cofactor.

It localises to the cytoplasm. The catalysed reaction is shikimate + ATP = 3-phosphoshikimate + ADP + H(+). The protein operates within metabolic intermediate biosynthesis; chorismate biosynthesis; chorismate from D-erythrose 4-phosphate and phosphoenolpyruvate: step 5/7. Functionally, catalyzes the specific phosphorylation of the 3-hydroxyl group of shikimic acid using ATP as a cosubstrate. The protein is Shikimate kinase of Chlamydia pneumoniae (Chlamydophila pneumoniae).